Reading from the N-terminus, the 155-residue chain is MASQQKVVEIYTDGACSGNPGVGGWGAILRWNGHERELYGGNAHTTNNQMELMAAICALKALKEPCLVDLYTDSVYVRNGISKWIEGWKKNNWRTASKSPVKNMELWQTLEDACSCHAVRWHWVKGHAGHPENERADALARKAIAQYRENGRFPT.

An RNase H type-1 domain is found at Gln-4–Ala-145. Residues Asp-13, Glu-51, Asp-73, and Asp-137 each contribute to the Mg(2+) site.

The protein belongs to the RNase H family. In terms of assembly, monomer. Mg(2+) serves as cofactor.

It is found in the cytoplasm. It carries out the reaction Endonucleolytic cleavage to 5'-phosphomonoester.. Endonuclease that specifically degrades the RNA of RNA-DNA hybrids. The polypeptide is Ribonuclease H (Bartonella tribocorum (strain CIP 105476 / IBS 506)).